The chain runs to 623 residues: Endoglucanase 7 (623 aa).

At 1-79 (MHPGNVWGGS…LGCVSVSRTV (79 aa)) the chain is on the cytoplasmic side. A helical; Signal-anchor for type II membrane protein transmembrane segment spans residues 80–100 (FLWTVGSIAVLFLVVALPIII). Residues 101–623 (VKSLPRHKSA…TPPPPKAWKP (523 aa)) are Extracellular-facing. Residues Asn-116, Asn-221, Asn-328, Asn-349, Asn-412, Asn-429, and Asn-464 are each glycosylated (N-linked (GlcNAc...) asparagine). His-517 is an active-site residue. A glycan (N-linked (GlcNAc...) asparagine) is linked at Asn-548. Asp-565 is a catalytic residue. An N-linked (GlcNAc...) asparagine glycan is attached at Asn-571. Glu-574 is an active-site residue.

It belongs to the glycosyl hydrolase 9 (cellulase E) family. As to expression, expressed in basal region of leaf blade and proximal parts of leaf and floral organ.

It localises to the membrane. It catalyses the reaction Endohydrolysis of (1-&gt;4)-beta-D-glucosidic linkages in cellulose, lichenin and cereal beta-D-glucans.. The sequence is that of Endoglucanase 7 (KOR2) from Arabidopsis thaliana (Mouse-ear cress).